Consider the following 366-residue polypeptide: MAGNTFGQLFTVTTFGESHGAGLGCIIDGCPPGLELSEADIQFDLDRRKPGTSRHVTQRREADQVEILSGVFEGKTTGTPIALLIRNTDQRSKDYGNIATSFRPGHADYTYWHKYGTRDYRGGGRSSARETAARVAAGAVAKKWLKEKFGTEITAYVTQVGEKEIRFEGCEHISQNPFFAANHSQIAELENYMDSVRKSLDSVGAKLHIEAANVPVGLGEPVFDRLDAEIAYAMMGINAVKGVEIGAGFDSVTQRGSEHGDELTPQGFLSNHSGGILGGISTGQDIRVNIAIKPTSSIATPRRSIDINGNPIELATHGRHDPCVGLRSAPIAEAMLALVLIDHALRHRAQNADVQVNTPDITLSNK.

The NADP(+) site is built by arginine 48 and arginine 54. FMN-binding positions include 125–127 (RSS), 238–239 (NA), glycine 278, 293–297 (KPTSS), and arginine 319.

This sequence belongs to the chorismate synthase family. In terms of assembly, homotetramer. Requires FMNH2 as cofactor.

The enzyme catalyses 5-O-(1-carboxyvinyl)-3-phosphoshikimate = chorismate + phosphate. It functions in the pathway metabolic intermediate biosynthesis; chorismate biosynthesis; chorismate from D-erythrose 4-phosphate and phosphoenolpyruvate: step 7/7. Catalyzes the anti-1,4-elimination of the C-3 phosphate and the C-6 proR hydrogen from 5-enolpyruvylshikimate-3-phosphate (EPSP) to yield chorismate, which is the branch point compound that serves as the starting substrate for the three terminal pathways of aromatic amino acid biosynthesis. This reaction introduces a second double bond into the aromatic ring system. The sequence is that of Chorismate synthase from Neisseria meningitidis serogroup B (strain ATCC BAA-335 / MC58).